Here is a 466-residue protein sequence, read N- to C-terminus: 3-isopropylmalate dehydratase large subunit (466 aa).

Cys-347, Cys-407, and Cys-410 together coordinate [4Fe-4S] cluster.

It belongs to the aconitase/IPM isomerase family. LeuC type 1 subfamily. Heterodimer of LeuC and LeuD. The cofactor is [4Fe-4S] cluster.

It carries out the reaction (2R,3S)-3-isopropylmalate = (2S)-2-isopropylmalate. The protein operates within amino-acid biosynthesis; L-leucine biosynthesis; L-leucine from 3-methyl-2-oxobutanoate: step 2/4. Catalyzes the isomerization between 2-isopropylmalate and 3-isopropylmalate, via the formation of 2-isopropylmaleate. This chain is 3-isopropylmalate dehydratase large subunit, found in Blochmanniella pennsylvanica (strain BPEN).